The chain runs to 225 residues: Putative ankyrin repeat protein RBE_1025 (225 aa).

ANK repeat units follow at residues 6 to 35 (LSKD…AINP), 41 to 71 (NGKT…NVNI), 75 to 120 (TGFT…DVNI), and 124 to 153 (KGNT…SPFI).

This chain is Putative ankyrin repeat protein RBE_1025, found in Rickettsia bellii (strain RML369-C).